Consider the following 424-residue polypeptide: Imidazolonepropionase (424 aa).

Fe(3+)-binding residues include His85 and His87. Residues His85 and His87 each coordinate Zn(2+). Arg94, Tyr157, and His190 together coordinate 4-imidazolone-5-propanoate. Position 157 (Tyr157) interacts with N-formimidoyl-L-glutamate. Fe(3+) is bound at residue His255. A Zn(2+)-binding site is contributed by His255. 4-imidazolone-5-propanoate is bound at residue Glu258. Asp329 is a binding site for Fe(3+). Zn(2+) is bound at residue Asp329. Positions 331 and 333 each coordinate N-formimidoyl-L-glutamate. A 4-imidazolone-5-propanoate-binding site is contributed by Ser334.

Belongs to the metallo-dependent hydrolases superfamily. HutI family. Zn(2+) is required as a cofactor. Requires Fe(3+) as cofactor.

The protein resides in the cytoplasm. It catalyses the reaction 4-imidazolone-5-propanoate + H2O = N-formimidoyl-L-glutamate. The protein operates within amino-acid degradation; L-histidine degradation into L-glutamate; N-formimidoyl-L-glutamate from L-histidine: step 3/3. Catalyzes the hydrolytic cleavage of the carbon-nitrogen bond in imidazolone-5-propanoate to yield N-formimidoyl-L-glutamate. It is the third step in the universal histidine degradation pathway. In Brevibacillus brevis (strain 47 / JCM 6285 / NBRC 100599), this protein is Imidazolonepropionase.